We begin with the raw amino-acid sequence, 209 residues long: Large ribosomal subunit protein bL25 (209 aa).

The segment at 190 to 209 is disordered; sequence GLKSADDEAEGEDAEEAAAE. A compositionally biased stretch (acidic residues) spans 196 to 209; it reads DEAEGEDAEEAAAE.

The protein belongs to the bacterial ribosomal protein bL25 family. CTC subfamily. Part of the 50S ribosomal subunit; part of the 5S rRNA/L5/L18/L25 subcomplex. Contacts the 5S rRNA. Binds to the 5S rRNA independently of L5 and L18.

This is one of the proteins that binds to the 5S RNA in the ribosome where it forms part of the central protuberance. This chain is Large ribosomal subunit protein bL25, found in Ruegeria sp. (strain TM1040) (Silicibacter sp.).